The chain runs to 361 residues: sn-glycerol-3-phosphate import ATP-binding protein UgpC (361 aa).

The region spanning 4 to 235 is the ABC transporter domain; the sequence is VTLRNVRKTY…PATTFVASFI (232 aa). Residue 37-44 coordinates ATP; sequence GPSGCGKS.

It belongs to the ABC transporter superfamily. sn-glycerol-3-phosphate importer (TC 3.A.1.1.3) family. The complex is composed of two ATP-binding proteins (UgpC), two transmembrane proteins (UgpA and UgpE) and a solute-binding protein (UgpB).

It is found in the cell inner membrane. It catalyses the reaction sn-glycerol 3-phosphate(out) + ATP + H2O = sn-glycerol 3-phosphate(in) + ADP + phosphate + H(+). Its function is as follows. Part of the ABC transporter complex UgpBAEC involved in sn-glycerol-3-phosphate (G3P) import. Responsible for energy coupling to the transport system. The protein is sn-glycerol-3-phosphate import ATP-binding protein UgpC of Rhodopseudomonas palustris (strain BisA53).